Consider the following 168-residue polypeptide: Endoribonuclease YbeY (168 aa).

Positions 128, 132, and 138 each coordinate Zn(2+).

Belongs to the endoribonuclease YbeY family. Zn(2+) serves as cofactor.

Its subcellular location is the cytoplasm. Single strand-specific metallo-endoribonuclease involved in late-stage 70S ribosome quality control and in maturation of the 3' terminus of the 16S rRNA. This Sphingopyxis alaskensis (strain DSM 13593 / LMG 18877 / RB2256) (Sphingomonas alaskensis) protein is Endoribonuclease YbeY.